The following is a 444-amino-acid chain: GTPase Der (444 aa).

EngA-type G domains lie at 2-167 (LKVA…LKEI) and 173-349 (FKFC…ENLN). GTP contacts are provided by residues 8 to 15 (GKPNVGKS), 55 to 59 (DTGGL), 118 to 121 (NKSE), 179 to 186 (GRPNVGKS), 226 to 230 (DTAGI), and 291 to 294 (NKWD). Positions 350 to 434 (LKFNSKILTD…PITLYFKNKT (85 aa)) constitute a KH-like domain.

Belongs to the TRAFAC class TrmE-Era-EngA-EngB-Septin-like GTPase superfamily. EngA (Der) GTPase family. As to quaternary structure, associates with the 50S ribosomal subunit.

Its function is as follows. GTPase that plays an essential role in the late steps of ribosome biogenesis. The chain is GTPase Der from Malacoplasma penetrans (strain HF-2) (Mycoplasma penetrans).